The chain runs to 190 residues: Dynein axonemal light chain 1 (190 aa).

Ala2 bears the N-acetylalanine mark. LRR repeat units follow at residues 49–70, 71–92, 94–115, and 116–137; these read NCEK…NGLK, NLRI…EAVG, TLEE…HIMK, and KLKI…VKLA. Ser56 bears the Phosphoserine mark. An LRRCT domain is found at 150–190; sequence NPLEEKHSAENNWIEEATKRVPKLKKLDGTPVIKGDEEEDN.

Belongs to the dynein light chain LC1-type family. In terms of assembly, interacts with ZMYND10 (via C-terminus). Interacts with DNAH5, a outer arm dynein heavy chain. Interacts with tubulin located within the A-tubule of the outer doublets in a ATP-independent manner. In terms of tissue distribution, expressed in tissues carrying motile cilia such as respiratory epithelia, ependyma and testis.

The protein localises to the cytoplasm. The protein resides in the cytoskeleton. Its subcellular location is the cilium axoneme. Part of the multisubunit axonemal ATPase complexes that generate the force for cilia motility and govern beat frequency. Component of the outer arm dynein (ODA). May be involved in a mechanosensory feedback mechanism controlling ODA activity based on external conformational cues by tethering the outer arm dynein heavy chain (DNAH5) to the microtubule within the axoneme. Important for ciliary function in the airways and for the function of the cilia that produce the nodal flow essential for the determination of the left-right asymmetry. The sequence is that of Dynein axonemal light chain 1 from Homo sapiens (Human).